The primary structure comprises 201 residues: Peptide deformylase (201 aa).

Residues 1–34 (MSLNFAAMARQSERQASTVMVPKGEEQPESPKIH) form a disordered region. Residues 23-32 (KGEEQPESPK) are compositionally biased toward basic and acidic residues. Fe cation contacts are provided by cysteine 121 and histidine 163. Residue glutamate 164 is part of the active site. Histidine 167 provides a ligand contact to Fe cation.

It belongs to the polypeptide deformylase family. The cofactor is Fe(2+).

The enzyme catalyses N-terminal N-formyl-L-methionyl-[peptide] + H2O = N-terminal L-methionyl-[peptide] + formate. Functionally, removes the formyl group from the N-terminal Met of newly synthesized proteins. Requires at least a dipeptide for an efficient rate of reaction. N-terminal L-methionine is a prerequisite for activity but the enzyme has broad specificity at other positions. The sequence is that of Peptide deformylase from Synechococcus sp. (strain RCC307).